The sequence spans 141 residues: Hemoglobin subunit alpha (141 aa).

The region spanning 1–141 is the Globin domain; it reads VLSPDDKKHV…VSTVLTSKYR (141 aa). At Ser-3 the chain carries Phosphoserine. N6-succinyllysine occurs at positions 7 and 11. Lys-16 carries the post-translational modification N6-acetyllysine; alternate. Lys-16 is subject to N6-succinyllysine; alternate. The residue at position 24 (Tyr-24) is a Phosphotyrosine. A Phosphoserine modification is found at Ser-35. Lys-40 carries the N6-succinyllysine modification. Ser-49 carries the phosphoserine modification. An O2-binding site is contributed by His-58. His-87 provides a ligand contact to heme b. Phosphoserine is present on Ser-102. A Phosphothreonine modification is found at Thr-108. Residues Ser-124 and Ser-131 each carry the phosphoserine modification. Phosphothreonine is present on residues Thr-134 and Thr-137. At Ser-138 the chain carries Phosphoserine.

Belongs to the globin family. In terms of assembly, heterotetramer of two alpha chains and two beta chains. As to expression, red blood cells.

Functionally, involved in oxygen transport from the lung to the various peripheral tissues. Its function is as follows. Hemopressin acts as an antagonist peptide of the cannabinoid receptor CNR1. Hemopressin-binding efficiently blocks cannabinoid receptor CNR1 and subsequent signaling. This is Hemoglobin subunit alpha (HBA) from Cercocebus atys (Sooty mangabey).